The chain runs to 483 residues: Glutamate--tRNA ligase (483 aa).

A 'HIGH' region motif is present at residues 11 to 21 (PSPTGLLHIGN). Positions 255-259 (KLSKR) match the 'KMSKS' region motif. Lys-258 serves as a coordination point for ATP.

It belongs to the class-I aminoacyl-tRNA synthetase family. Glutamate--tRNA ligase type 1 subfamily. Monomer.

Its subcellular location is the cytoplasm. The enzyme catalyses tRNA(Glu) + L-glutamate + ATP = L-glutamyl-tRNA(Glu) + AMP + diphosphate. Its function is as follows. Catalyzes the attachment of glutamate to tRNA(Glu) in a two-step reaction: glutamate is first activated by ATP to form Glu-AMP and then transferred to the acceptor end of tRNA(Glu). The polypeptide is Glutamate--tRNA ligase (Lactococcus lactis subsp. cremoris (strain MG1363)).